A 176-amino-acid polypeptide reads, in one-letter code: Large ribosomal subunit protein uL10 (176 aa).

This sequence belongs to the universal ribosomal protein uL10 family. Part of the ribosomal stalk of the 50S ribosomal subunit. The N-terminus interacts with L11 and the large rRNA to form the base of the stalk. The C-terminus forms an elongated spine to which L12 dimers bind in a sequential fashion forming a multimeric L10(L12)X complex.

Functionally, forms part of the ribosomal stalk, playing a central role in the interaction of the ribosome with GTP-bound translation factors. The polypeptide is Large ribosomal subunit protein uL10 (Thioalkalivibrio sulfidiphilus (strain HL-EbGR7)).